The primary structure comprises 467 residues: MDRRKKPLDVTASSLVDLKAELFRKQEEFKQEKLLKDSGVFGKPKTTNKKPSIWSKQNVGVSNRAEKDAEQKIEEQKTLDKAREKLEEKAKLYEKMTKGDFIDEEVEDMYLVDFTQKIIDKRKEMEASGAHRDSQKAGERDDDEENLPEGEIPPPQDPSEEWVDYVDSLGRSRRCMRKDLPDLLEMDKNLQGRLFISPANEKTLLSEDMRKELQRQQWEEEEREALKRPMGPVHYEDIRENEARQLGVGYFAFARDKELRNKQMKTLEMLREQTTDQRTKRENIKEKRKAILEARLAKLRQKKMKKSKEGGTEEENRDGDVIGPLPPEPEAVPTPRPAAQSSKVEVIVQERKDTKPGVPHIREWDRGKEFSFGYWSKRQSDLRAERDPEFAPPSDYFVGQKRTGFSSSQAWSRPGPAQSDPGQCPDQSHGPSPEHTSPTPAPDNPPQAPTVTFKTLDDMISYYKQVT.

Disordered stretches follow at residues 40–77 and 124–162; these read VFGK…EEQK and EMEA…SEEW. Residues 63–99 are a coiled coil; it reads NRAEKDAEQKIEEQKTLDKAREKLEEKAKLYEKMTKG. 2 stretches are compositionally biased toward basic and acidic residues: residues 64–77 and 124–139; these read RAEK…EEQK and EMEA…KAGE. S197 is subject to Phosphoserine. Positions 267 to 309 form a coiled coil; that stretch reads LEMLREQTTDQRTKRENIKEKRKAILEARLAKLRQKKMKKSKE. 2 disordered regions span residues 299–363 and 378–453; these read LRQK…HIRE and RQSD…TVTF. Residues 324–336 are compositionally biased toward pro residues; it reads PLPPEPEAVPTPR. 2 stretches are compositionally biased toward basic and acidic residues: residues 348-363 and 378-389; these read VQER…HIRE and RQSDLRAERDPE. Polar residues predominate over residues 425–437; that stretch reads PDQSHGPSPEHTS. The span at 439-448 shows a compositional bias: pro residues; sequence TPAPDNPPQA.

In terms of tissue distribution, widely expressed.

Its subcellular location is the nucleus. In terms of biological role, probably involved in neuronal development. The chain is Coiled-coil domain-containing protein 174 (CCDC174) from Homo sapiens (Human).